The primary structure comprises 491 residues: Glycogen synthase 1 (491 aa).

Lys15 lines the ADP-alpha-D-glucose pocket.

It belongs to the glycosyltransferase 1 family. Bacterial/plant glycogen synthase subfamily.

The enzyme catalyses [(1-&gt;4)-alpha-D-glucosyl](n) + ADP-alpha-D-glucose = [(1-&gt;4)-alpha-D-glucosyl](n+1) + ADP + H(+). It functions in the pathway glycan biosynthesis; glycogen biosynthesis. Its function is as follows. Synthesizes alpha-1,4-glucan chains using ADP-glucose. In Synechococcus sp. (strain JA-2-3B'a(2-13)) (Cyanobacteria bacterium Yellowstone B-Prime), this protein is Glycogen synthase 1.